Consider the following 474-residue polypeptide: MSKQLPQDFVMGGATAAYQVEGATKEDGKGRVLWDDFLDKQGRFKPDPAADFYHRYDEDLALAEKYGHQVIRVSIAWSRIFPDGAGEVEPRGVAFYHKLFADCAAHHIEPFVTLHHFDTPERLHEAGDWLSQEMLDDFVAYAKFCFEEFSEVKYWITINEPTSMAVQQYTTGTFPPAESGRFDKTFQAEHNQMVAHARIVNLYKSMQLGGQIGIVHALQTVYPYSDSAVDHHAAELQDALENRLYLDGTLAGEYHQETLALVKEILDANHQPMFQSTPQEMKAIDEAAHQLDFVGVNNYFSKWLRAYHGKSETIHNGDGTKGSSVARLQGVGEEKLPDGIETTDWDWSIYPRGMYDILMRIHNDYPLVPVTYVTENGIGLKESLPENATPDTVIEDPKRIDYVKKYLSAMADAIHDGANVKGYFIWSLQDQFSWTNGYSKRYGLFFVDFPTQNRYIKQSAEWFKSVSETHIIPD.

D-galactose 6-phosphate-binding residues include Gln-19, His-116, Asn-159, Glu-160, and Asn-297. The active-site Proton donor is Glu-160. The active-site Nucleophile is the Glu-375. Ser-433, Trp-434, Lys-440, and Tyr-442 together coordinate D-galactose 6-phosphate.

This sequence belongs to the glycosyl hydrolase 1 family.

It catalyses the reaction a 6-phospho-beta-D-galactoside + H2O = D-galactose 6-phosphate + an alcohol. It participates in carbohydrate metabolism; lactose degradation; D-galactose 6-phosphate and beta-D-glucose from lactose 6-phosphate: step 1/1. The polypeptide is 6-phospho-beta-galactosidase (Lacticaseibacillus casei (Lactobacillus casei)).